The primary structure comprises 633 residues: Glutamyl-tRNA(Gln) amidotransferase subunit E (633 aa).

It belongs to the GatB/GatE family. GatE subfamily. As to quaternary structure, heterodimer of GatD and GatE.

It catalyses the reaction L-glutamyl-tRNA(Gln) + L-glutamine + ATP + H2O = L-glutaminyl-tRNA(Gln) + L-glutamate + ADP + phosphate + H(+). Functionally, allows the formation of correctly charged Gln-tRNA(Gln) through the transamidation of misacylated Glu-tRNA(Gln) in organisms which lack glutaminyl-tRNA synthetase. The reaction takes place in the presence of glutamine and ATP through an activated gamma-phospho-Glu-tRNA(Gln). The GatDE system is specific for glutamate and does not act on aspartate. This chain is Glutamyl-tRNA(Gln) amidotransferase subunit E, found in Saccharolobus islandicus (strain L.S.2.15 / Lassen #1) (Sulfolobus islandicus).